The chain runs to 146 residues: Hemoglobin subunit beta-2 (146 aa).

In terms of domain architecture, Globin spans 2-146; the sequence is HWTAEEKQLI…VAHALARRYH (145 aa). Heme b is bound by residues histidine 63 and histidine 92.

It belongs to the globin family. In terms of assembly, heterotetramer of two alpha chains and two beta chains. In terms of tissue distribution, red blood cells.

Involved in oxygen transport from the lung to the various peripheral tissues. This chain is Hemoglobin subunit beta-2, found in Iguana iguana (Common iguana).